We begin with the raw amino-acid sequence, 108 residues long: Urease subunit beta (108 aa).

The protein belongs to the urease beta subunit family. As to quaternary structure, probable heterotrimer of UreA (gamma), UreB (beta) and UreC (alpha) subunits. Three heterotrimers associate to form the active enzyme. The trimeric urease interacts with an accessory complex composed of UreD, UreF and UreG, which is required for the assembly of the nickel containing metallocenter of UreC. The UreE protein may also play a direct role in nickel transfer to the urease apoprotein.

It localises to the cytoplasm. The enzyme catalyses urea + 2 H2O + H(+) = hydrogencarbonate + 2 NH4(+). It functions in the pathway nitrogen metabolism; urea degradation; CO(2) and NH(3) from urea (urease route): step 1/1. This chain is Urease subunit beta, found in Proteus mirabilis (strain HI4320).